We begin with the raw amino-acid sequence, 402 residues long: Tryptophan synthase beta chain (402 aa).

Lysine 91 is modified (N6-(pyridoxal phosphate)lysine).

The protein belongs to the TrpB family. Tetramer of two alpha and two beta chains. Pyridoxal 5'-phosphate serves as cofactor.

It carries out the reaction (1S,2R)-1-C-(indol-3-yl)glycerol 3-phosphate + L-serine = D-glyceraldehyde 3-phosphate + L-tryptophan + H2O. It functions in the pathway amino-acid biosynthesis; L-tryptophan biosynthesis; L-tryptophan from chorismate: step 5/5. The beta subunit is responsible for the synthesis of L-tryptophan from indole and L-serine. The protein is Tryptophan synthase beta chain of Streptococcus thermophilus (strain ATCC BAA-491 / LMD-9).